We begin with the raw amino-acid sequence, 555 residues long: MKDTVMAYLLENSIKFKGKPNPKAAMGKILGENPDLRSNVKELNEVISEVVKEIESMSLEEQQAKLDELAPEGLGQKTERKRKEIELKNVKGNVVMRFAPNPSGPLHIGHARASVLNDFFTKKYNGKLVLRLEDTDAKRVLPEAYEMIQEDLKWLGVKVDEVIVQSERLEIYYEYGRKLIEMGHAYVCDCDAEEFRNLREQGIPCKCRDTTPEENIALWEKMLAGELENVAVRLKTDIVHKNPSIRDFPIFRIERTPHPKNGTKYHVYPLMNLSVTVDDHLLGMTHVLRGKDHIVNTEKQEYIYNYFGWEIPEYVHYGILKIEGPVLSTSKMHAGILSGEYSGWDDARLGTLRALRKRGIRPEALYKLMVEIGIKQADVRFAWENLYAANKDIIDKDARRFFFVESPKKLVISGAESKKIDLRMHPDRNELGNRELLFDGEIYVSDDLEVGTMYRLMELFNIVIEKIENDVIYAKYDSDDLAVAKSNKASIIHWIPVKDSIPVTVIDENAEKIEGFAEKDFAVVNEDDFVQFERFGFVRVDEKEDNGYTCYLTHK.

Positions 100–110 match the 'HIGH' region motif; sequence PNPSGPLHIGH.

The protein belongs to the class-I aminoacyl-tRNA synthetase family. Glutamate--tRNA ligase type 2 subfamily.

It localises to the cytoplasm. It catalyses the reaction tRNA(Glu) + L-glutamate + ATP = L-glutamyl-tRNA(Glu) + AMP + diphosphate. Functionally, catalyzes the attachment of glutamate to tRNA(Glu) in a two-step reaction: glutamate is first activated by ATP to form Glu-AMP and then transferred to the acceptor end of tRNA(Glu). This is Glutamate--tRNA ligase from Methanococcus maripaludis (strain C7 / ATCC BAA-1331).